We begin with the raw amino-acid sequence, 71 residues long: UPF0434 protein Meso_3270 (71 aa).

This sequence belongs to the UPF0434 family.

This Chelativorans sp. (strain BNC1) protein is UPF0434 protein Meso_3270.